The sequence spans 503 residues: Intracellular exo-alpha-(1-&gt;5)-L-arabinofuranosidase (503 aa).

Alpha-L-arabinofuranose contacts are provided by glutamate 27, asparagine 72, and asparagine 172. Glutamate 173 serves as the catalytic Proton donor/acceptor. Residues tyrosine 244, glutamate 292, and glutamine 352 each contribute to the alpha-L-arabinofuranose site. Glutamate 292 acts as the Nucleophile in catalysis.

This sequence belongs to the glycosyl hydrolase 51 family. As to quaternary structure, homohexamer; trimer of dimers.

It is found in the cytoplasm. It catalyses the reaction Hydrolysis of terminal non-reducing alpha-L-arabinofuranoside residues in alpha-L-arabinosides.. It participates in glycan metabolism; L-arabinan degradation. In terms of biological role, involved in the degradation of arabinan and is a key enzyme in the complete degradation of the plant cell wall. Catalyzes the cleavage of terminal alpha-(1-&gt;5)-arabinofuranosyl bonds in small oligosaccharides as alpha-(1-&gt;5)-linked arabinobiose/arabinotriose, but does not display significant activity against linear non-substituted arabinan. It is also highly efficient in the cleavage of alpha-(1-&gt;3)-linked arabinoside of xylobiose and of the alpha-(1-&gt;3)-linked arabinoside decorations of polymeric wheat arabinoxylan. It exhibits very low activity against sugar beet arabinan. This Acetivibrio thermocellus (strain ATCC 27405 / DSM 1237 / JCM 9322 / NBRC 103400 / NCIMB 10682 / NRRL B-4536 / VPI 7372) (Clostridium thermocellum) protein is Intracellular exo-alpha-(1-&gt;5)-L-arabinofuranosidase.